A 194-amino-acid polypeptide reads, in one-letter code: E3 ubiquitin-protein ligase RNF4 (194 aa).

Residues 1–12 (MSTRNPQRKRRG) show a composition bias toward basic residues. The segment at 1-20 (MSTRNPQRKRRGGTVNSRQT) is required for ubiquitination activity. Residues 1 to 39 (MSTRNPQRKRRGGTVNSRQTQKRTRETTSTPEVSLETEP) form a disordered region. Positions 6–65 (PQRKRRGGTVNSRQTQKRTRETTSTPEVSLETEPIELVETVGDEIVDLTCESLEPVVVDL) are mediates interaction with TRPS1. Residues 40 to 43 (IELV) carry the SUMO interaction motif 1; mediates the binding to polysumoylated substrates motif. The SUMO interaction motif 2; mediates the binding to polysumoylated substrates motif lies at 50–53 (IVDL). The SUMO interaction motif 3; mediates the binding to polysumoylated substrates signature appears at 61-63 (VVV). The short motif at 71–74 (VVIV) is the SUMO interaction motif 4; mediates the binding to polysumoylated substrates element. Phosphoserine occurs at positions 98 and 99. The disordered stretch occupies residues 110–130 (VYVTTHTPRSTKDDGATGPRP). Zn(2+)-binding residues include C136, C139, C158, H160, C163, C166, C177, and C180. An RING-type zinc finger spans residues 136–181 (CPICMDGYSEIVQNGRLIVSTECGHVFCSQCLRDSLKNANTCPTCR).

Homodimer (via RING-type zinc finger domain). Interacts with GSC2. Interacts with AR/the androgen receptor and TBP. Interacts with TCF20. Interacts with PATZ1. Interacts with TRPS1; negatively regulates TRPS1 transcriptional repressor activity. Interacts with PML (isoform PML-1, isoform PML-2, isoform PML-3, isoform PML-4, isoform PML-5 and isoform PML-6). Interacts with PRDM1/Blimp-1. Post-translationally, sumoylated; conjugated by one or two SUMO1 moieties. In terms of processing, autoubiquitinated. As to expression, in the embryo, expressed primarily in the developing nervous system with strong expression in the dorsal root ganglia and gonads. Ubiquitously expressed in the adult.

It localises to the cytoplasm. It is found in the nucleus. The protein resides in the PML body. The enzyme catalyses S-ubiquitinyl-[E2 ubiquitin-conjugating enzyme]-L-cysteine + [acceptor protein]-L-lysine = [E2 ubiquitin-conjugating enzyme]-L-cysteine + N(6)-ubiquitinyl-[acceptor protein]-L-lysine.. It participates in protein modification; protein ubiquitination. Its function is as follows. E3 ubiquitin-protein ligase which binds polysumoylated chains covalently attached to proteins and mediates 'Lys-6'-, 'Lys-11'-, 'Lys-48'- and 'Lys-63'-linked polyubiquitination of those substrates and their subsequent targeting to the proteasome for degradation. Regulates the degradation of several proteins including PML and the transcriptional activator PEA3. Involved in chromosome alignment and spindle assembly, it regulates the kinetochore CENPH-CENPI-CENPK complex by targeting polysumoylated CENPI to proteasomal degradation. Regulates the cellular responses to hypoxia and heat shock through degradation of respectively EPAS1 and PARP1. Alternatively, it may also bind DNA/nucleosomes and have a more direct role in the regulation of transcription for instance enhancing basal transcription and steroid receptor-mediated transcriptional activation. Catalyzes ubiquitination of sumoylated PARP1 in response to PARP1 trapping to chromatin, leading to PARP1 removal from chromatin by VCP/p97. The chain is E3 ubiquitin-protein ligase RNF4 from Mus musculus (Mouse).